The primary structure comprises 366 residues: Alanine racemase (366 aa).

K40 acts as the Proton acceptor; specific for D-alanine in catalysis. At K40 the chain carries N6-(pyridoxal phosphate)lysine. Substrate is bound at residue R136. The active-site Proton acceptor; specific for L-alanine is the Y263. M310 serves as a coordination point for substrate.

It belongs to the alanine racemase family. Pyridoxal 5'-phosphate is required as a cofactor.

The catalysed reaction is L-alanine = D-alanine. The protein operates within amino-acid biosynthesis; D-alanine biosynthesis; D-alanine from L-alanine: step 1/1. Its function is as follows. Catalyzes the interconversion of L-alanine and D-alanine. May also act on other amino acids. The sequence is that of Alanine racemase (alr) from Streptococcus pyogenes serotype M1.